We begin with the raw amino-acid sequence, 507 residues long: Probable DNA ligase (507 aa).

Glu209 serves as a coordination point for ATP. Catalysis depends on Lys211, which acts as the N6-AMP-lysine intermediate. Positions 216, 231, 260, 295, 366, and 372 each coordinate ATP.

Belongs to the ATP-dependent DNA ligase family. It depends on Mg(2+) as a cofactor.

It carries out the reaction ATP + (deoxyribonucleotide)n-3'-hydroxyl + 5'-phospho-(deoxyribonucleotide)m = (deoxyribonucleotide)n+m + AMP + diphosphate.. DNA ligase that seals nicks in double-stranded DNA during DNA replication, DNA recombination and DNA repair. This is Probable DNA ligase from Pseudarthrobacter chlorophenolicus (strain ATCC 700700 / DSM 12829 / CIP 107037 / JCM 12360 / KCTC 9906 / NCIMB 13794 / A6) (Arthrobacter chlorophenolicus).